We begin with the raw amino-acid sequence, 580 residues long: Micronemal protein 4 (580 aa).

Positions 1 to 25 are cleaved as a signal peptide; that stretch reads MRASLPVHLVVCTQLSAVWFGVAKA. 6 Apple domains span residues 68–137, 141–214, 232–301, 305–375, 419–488, and 492–565; these read CVHS…SRSC, CFEQ…KQFC, CIQL…PKSC, CFSN…VTVG, CVHT…SRTC, and CLRR…YTFC. Cystine bridges form between cysteine 68/cysteine 137, cysteine 93/cysteine 115, cysteine 97/cysteine 103, cysteine 141/cysteine 214, cysteine 166/cysteine 188, cysteine 170/cysteine 176, cysteine 232/cysteine 301, cysteine 257/cysteine 279, cysteine 261/cysteine 267, cysteine 305/cysteine 380, cysteine 332/cysteine 354, cysteine 336/cysteine 342, cysteine 419/cysteine 488, cysteine 444/cysteine 466, and cysteine 448/cysteine 454.

In terms of assembly, monomer. Part of the MIC6-MIC1-MIC4 complex. Interacts (via the second apple domain) directly with MIC1 (via the beta-finger region). Interacts with murine TLR2; the interaction promotes activation of bone marrow-derived dendritic cells and macrophages in the host. Interacts with murine TLR4; the interaction promotes activation of bone marrow-derived dendritic cells and macrophages in the host. In terms of processing, proteolytically cleaved at the N- and C-terminus after release from the microneme.

The protein localises to the cytoplasmic vesicle. It localises to the secretory vesicle. It is found in the microneme. Its subcellular location is the host early endosome. With respect to regulation, lacto-N-biose inhibits binding to asialofetuin, a host glycoprotein. Functionally, soluble adhesin with carbohydrate-binding activity. Binds to galactose-terminating oligosaccharides. Required for attachment of the parasite to the host cell prior to invasion. Triggers the activation of murine bone marrow-derived dendritic cells and macrophages and production of pro-inflammatory cytokines, such as IL12 (IL12B/IL12A), in host TLR2/TLR4-dependent manner. Triggers the production of anti-inflammatory cytokine IL10 in murine bone marrow-derived macrophages in host TLR4-dependent manner. Induces transient endotoxin tolerance in murine bone marrow-derived macrophages, manifested by reduced TNF-alpha (TNF) production in response to challenge with lipopolysaccharides (LPS). In Toxoplasma gondii, this protein is Micronemal protein 4.